The chain runs to 3118 residues: Laminin subunit alpha-2 (3118 aa).

Positions 1–19 are cleaved as a signal peptide; that stretch reads MPAATAGILLLLLLGTLEG. The Laminin N-terminal domain occupies 31–282; the sequence is QQRGLFPAVL…SVKDISVGGM (252 aa). N51 and N85 each carry an N-linked (GlcNAc...) asparagine glycan. 6 cysteine pairs are disulfide-bonded: C283–C292, C285–C303, C305–C314, C317–C337, C340–C349, and C342–C374. 4 consecutive Laminin EGF-like domains span residues 283 to 339, 340 to 409, 410 to 464, and 465 to 513; these read CICY…ECEA, CNCH…PCQP, CHCD…DCQP, and CNCS…GCEE. An N-linked (GlcNAc...) asparagine glycan is attached at N299. 2 N-linked (GlcNAc...) asparagine glycosylation sites follow: N359 and N376. 10 disulfide bridges follow: C377-C386, C389-C407, C410-C422, C412-C438, C440-C449, C452-C462, C465-C478, C467-C482, C484-C493, and C496-C511. N466 carries an N-linked (GlcNAc...) asparagine glycan. Residues 514-523 form the Laminin EGF-like 5; first part domain; it reads CFCSGVSNRC. The region spanning 527–719 is the Laminin IV type A 1 domain; the sequence is YWTYGNIQDM…DRRIATDVEV (193 aa). One can recognise a Laminin EGF-like 5; second part domain in the interval 720 to 752; that stretch reads CQCPPGYSGSSCETCWPRHRRVNGTIFGGICEP. N-linked (GlcNAc...) asparagine glycosylation occurs at N742. 32 cysteine pairs are disulfide-bonded: C753-C762, C755-C769, C772-C781, C784-C800, C803-C818, C805-C828, C831-C840, C843-C858, C861-C875, C863-C882, C885-C894, C897-C911, C914-C926, C916-C933, C935-C944, C947-C960, C963-C975, C965-C981, C983-C992, C995-C1007, C1010-C1019, C1012-C1026, C1028-C1037, C1040-C1053, C1056-C1068, C1058-C1075, C1077-C1086, C1089-C1099, C1102-C1114, C1104-C1130, C1132-C1141, and C1144-C1159. Laminin EGF-like domains follow at residues 753-802, 803-860, 861-913, 914-962, 963-1009, 1010-1055, 1056-1101, and 1102-1161; these read CQCF…DCQP, CACP…SCQP, CQCN…NCQP, CRCN…GCLP, CNCN…GCIA, CDCS…GCKV, CNCS…LCTL, and CDCF…GCSS. Residue N919 is glycosylated (N-linked (GlcNAc...) asparagine). The N-linked (GlcNAc...) asparagine glycan is linked to N1031. A glycan (N-linked (GlcNAc...) asparagine) is linked at N1057. The Laminin EGF-like 14; first part domain maps to 1162–1171; that stretch reads CYCFGVTSQC. The 204-residue stretch at 1172–1375 folds into the Laminin IV type A 2 domain; that stretch reads SEAKGLIRTW…GSPPAHLIER (204 aa). The 40-residue stretch at 1376-1415 folds into the Laminin EGF-like 14; second part domain; the sequence is CDCPPGYSGLSCETCAPGFYRLRSEPGGRTPGPTLGTCVP. 13 disulfide bridges follow: C1378–C1387, C1416–C1425, C1418–C1432, C1435–C1444, C1447–C1462, C1465–C1480, C1467–C1490, C1493–C1502, C1505–C1520, C1523–C1535, C1525–C1542, C1544–C1553, and C1556–C1567. Laminin EGF-like domains lie at 1416–1464, 1465–1522, and 1523–1569; these read CQCN…DCQP, CACP…SCQE, and CECD…ECVF. Positions 1570 to 2140 are domain II and I; the sequence is CGDECTGLLL…NQARKQANSI (571 aa). 12 N-linked (GlcNAc...) asparagine glycosylation sites follow: N1593, N1610, N1696, N1806, N1897, N1912, N1916, N2013, N2024, N2041, N2122, and N2236. A coiled-coil region spans residues 1662–1863; it reads QDAERTNSRA…DIKTKLPPMS (202 aa). Residues 1923 to 2146 adopt a coiled-coil conformation; the sequence is AYSNIKDYID…ANSIKVSVSS (224 aa). 5 Laminin G-like domains span residues 2141–2324, 2336–2517, 2522–2706, 2759–2930, and 2929–3115; these read KVSV…CKGC, TIQF…TKGC, VYTV…IGRC, SKQF…VGTC, and TCFA…PVSC. The cysteines at positions 2298 and 2324 are disulfide-linked. Residues N2356, N2431, and N2474 are each glycosylated (N-linked (GlcNAc...) asparagine). C2491 and C2517 are joined by a disulfide. N-linked (GlcNAc...) asparagine glycans are attached at residues N2547, N2554, and N2644. C2679 and C2706 are oxidised to a cystine. Residue N2889 is glycosylated (N-linked (GlcNAc...) asparagine). 2 disulfide bridges follow: C2905–C2930 and C3083–C3115.

Laminin is a complex glycoprotein, consisting of three different polypeptide chains (alpha, beta, gamma), which are bound to each other by disulfide bonds into a cross-shaped molecule comprising one long and three short arms with globules at each end. Alpha-2 is a subunit of laminin-2 (laminin-211 or merosin), laminin-4 (laminin-221 or S-merosin) and laminin-12 (laminin-213). Interacts with FBLN1, FBLN2 and NID2.

The protein localises to the secreted. Its subcellular location is the extracellular space. It is found in the extracellular matrix. The protein resides in the basement membrane. Its function is as follows. Binding to cells via a high affinity receptor, laminin is thought to mediate the attachment, migration and organization of cells into tissues during embryonic development by interacting with other extracellular matrix components. This chain is Laminin subunit alpha-2 (Lama2), found in Mus musculus (Mouse).